The primary structure comprises 589 residues: F-box only protein 24 (589 aa).

One can recognise an F-box domain in the interval 23 to 69 (PISVQLFPPELVEHIVSFLPVKDLVALGQTCHYFHEVCDAEGVWRRI). An RCC1 repeat occupies 386-435 (GRIFMQGNNRYGQLGTGDKMDRGEPTQVHYLQRPIALWCGLNHSLVLSQT). The interval 506–526 (VGGSPEPSQGAGAPQDPGGTA) is disordered.

Directly interacts with SKP1 and CUL1.

Functionally, substrate-recognition component of the SCF (SKP1-CUL1-F-box protein)-type E3 ubiquitin ligase complex. This Mus musculus (Mouse) protein is F-box only protein 24 (Fbxo24).